The primary structure comprises 165 residues: Lithostathine (165 aa).

The signal sequence occupies residues 1-21 (MTRNKYFILLSCLMVLSPSQG). Gln22 is subject to Pyrrolidone carboxylic acid. In terms of domain architecture, C-type lectin spans 33 to 163 (ITCPEGSNAY…DAQLSFVCKF (131 aa)). Intrachain disulfides connect Cys35–Cys46, Cys63–Cys161, and Cys136–Cys153. A glycan (N-linked (GlcNAc...) asparagine) is linked at Asn129.

Expressed only in regenerating islets, but not in normal pancreatic islets, insulinomas or regenerating liver.

The protein localises to the secreted. Might act as an inhibitor of spontaneous calcium carbonate precipitation. The sequence is that of Lithostathine (Reg1) from Rattus norvegicus (Rat).